The following is a 427-amino-acid chain: Transcobalamin-2 (427 aa).

A signal peptide spans 1-18; the sequence is MRHLGALLFLLGVLGALA. 3 disulfide bridges follow: Cys21–Cys267, Cys116–Cys309, and Cys165–Cys205. Residues Gln104, 152–156, His190, 190–194, Asn242, Ser245, Gln291, and 395–397 contribute to the cob(II)alamin site; these read TSYYQ, HHSVD, and WQL.

This sequence belongs to the eukaryotic cobalamin transport proteins family. In terms of assembly, interacts with CD320 (via LDL-receptor class A domains).

The protein resides in the secreted. In terms of biological role, primary vitamin B12-binding and transport protein. Delivers cobalamin to cells. This chain is Transcobalamin-2 (TCN2), found in Pongo abelii (Sumatran orangutan).